Reading from the N-terminus, the 274-residue chain is Diaminopimelate epimerase (274 aa).

Positions 11, 44, and 64 each coordinate substrate. The active-site Proton donor is Cys73. Substrate-binding positions include 74–75, Asn157, Asn190, and 208–209; these read GN and ER. Cys217 serves as the catalytic Proton acceptor. Residue 218-219 coordinates substrate; sequence GS.

The protein belongs to the diaminopimelate epimerase family. Homodimer.

It localises to the cytoplasm. It catalyses the reaction (2S,6S)-2,6-diaminopimelate = meso-2,6-diaminopimelate. It functions in the pathway amino-acid biosynthesis; L-lysine biosynthesis via DAP pathway; DL-2,6-diaminopimelate from LL-2,6-diaminopimelate: step 1/1. In terms of biological role, catalyzes the stereoinversion of LL-2,6-diaminopimelate (L,L-DAP) to meso-diaminopimelate (meso-DAP), a precursor of L-lysine and an essential component of the bacterial peptidoglycan. The sequence is that of Diaminopimelate epimerase from Haemophilus ducreyi (strain 35000HP / ATCC 700724).